A 2718-amino-acid chain; its full sequence is Zinc finger protein 40 (2718 aa).

Disordered stretches follow at residues His-58–Ser-182, Leu-210–Gln-256, and Gly-335–Ile-373. Ser-141 is subject to Phosphoserine. The span at Glu-142–Asp-158 shows a compositional bias: basic and acidic residues. 2 stretches are compositionally biased toward polar residues: residues Asp-164 to Ser-182 and Lys-237 to Gln-256. The segment at Tyr-406 to His-428 adopts a C2H2-type 1 zinc-finger fold. Thr-429 carries the phosphothreonine modification. The C2H2-type 2 zinc-finger motif lies at Tyr-434 to His-456. A phosphoserine mark is found at Ser-476, Ser-479, Ser-492, Ser-495, Ser-571, and Ser-577. Residues Ser-484 to Met-511 form a disordered region. Residues Glu-490–Ala-500 are compositionally biased toward acidic residues. Residues Arg-574 to Lys-727 are disordered. Residues Asp-576–Pro-585 are compositionally biased toward basic and acidic residues. Over residues Ser-588 to Gly-612 the composition is skewed to polar residues. Positions Glu-617–Gly-626 are enriched in basic and acidic residues. 2 stretches are compositionally biased toward polar residues: residues Ala-644–Ser-687 and Ser-698–Ala-721. Phosphoserine is present on residues Ser-670 and Ser-681. The CCHC HIVEP-type zinc finger occupies Gly-956–His-986. Residues Trp-1022 to Asn-1062 are disordered. Ser-1036, Ser-1051, Ser-1091, Ser-1158, Ser-1161, and Ser-1180 each carry phosphoserine. Residues Gln-1045–Asn-1062 show a composition bias toward polar residues. The disordered stretch occupies residues His-1138–Gly-1169. Over residues Val-1160–Gly-1169 the composition is skewed to polar residues. Basic and acidic residues-rich tracts occupy residues Leu-1202–Val-1219 and Asp-1246–Lys-1259. Disordered stretches follow at residues Leu-1202–Lys-1282, Arg-1384–Gly-1414, and Ser-1523–Gly-1548. Thr-1268 is modified (phosphothreonine). Composition is skewed to low complexity over residues Thr-1394–Pro-1406 and Ser-1523–Gln-1536. Residues Ser-1735, Ser-1740, Ser-1749, and Ser-1753 each carry the phosphoserine modification. Residues Val-1871 to Ile-1883 are compositionally biased toward polar residues. The disordered stretch occupies residues Val-1871–Glu-1911. Phosphoserine is present on residues Ser-1884 and Ser-2033. 2 consecutive C2H2-type zinc fingers follow at residues Tyr-2088–His-2110 and Tyr-2116–His-2140. Disordered stretches follow at residues Asp-2155–Thr-2228, Ser-2265–Ser-2303, Ser-2327–Phe-2381, and Pro-2572–Thr-2718. A compositionally biased stretch (basic and acidic residues) spans Glu-2164–Tyr-2175. The span at Asp-2176 to Gln-2198 shows a compositional bias: acidic residues. 2 stretches are compositionally biased toward polar residues: residues Ala-2199–Val-2226 and Thr-2288–His-2300. Phosphoserine is present on residues Ser-2327 and Ser-2599. A compositionally biased stretch (polar residues) spans Ala-2573–Arg-2608. The segment covering Asp-2623–Lys-2637 has biased composition (basic and acidic residues). The span at Thr-2651 to Pro-2663 shows a compositional bias: polar residues. A phosphoserine mark is found at Ser-2669 and Ser-2682.

In terms of assembly, interacts with UTP4.

Its subcellular location is the nucleus. It localises to the cytoplasm. Its function is as follows. This protein specifically binds to the DNA sequence 5'-GGGACTTTCC-3' which is found in the enhancer elements of numerous viral promoters such as those of SV40, CMV, or HIV-1. In addition, related sequences are found in the enhancer elements of a number of cellular promoters, including those of the class I MHC, interleukin-2 receptor, and interferon-beta genes. It may act in T-cell activation. Involved in activating HIV-1 gene expression. Isoform 2 and isoform 3 also bind to the IPCS (IRF1 and p53 common sequence) DNA sequence in the promoter region of interferon regulatory factor 1 and p53 genes and are involved in transcription regulation of these genes. Isoform 2 does not activate HIV-1 gene expression. Isoform 2 and isoform 3 may be involved in apoptosis. The chain is Zinc finger protein 40 (HIVEP1) from Homo sapiens (Human).